Reading from the N-terminus, the 383-residue chain is Histidine decarboxylase (383 aa).

H120 provides a ligand contact to substrate. K233 is modified (N6-(pyridoxal phosphate)lysine).

Belongs to the group II decarboxylase family. In terms of assembly, homotetramer. Pyridoxal 5'-phosphate is required as a cofactor.

The enzyme catalyses L-histidine + H(+) = histamine + CO2. This Acinetobacter baumannii (strain ACICU) protein is Histidine decarboxylase.